A 551-amino-acid polypeptide reads, in one-letter code: Meiotically up-regulated gene 184 protein (551 aa).

In terms of domain architecture, J spans 12 to 78 (DYYAILKLQK…TKRLIYDQLF (67 aa)). Over residues 85 to 122 (RSQYKPNSTSNPSKHTSAYASYNKGKNSKWSSPFASTT) the composition is skewed to polar residues. Disordered stretches follow at residues 85-153 (RSQY…FPRD), 176-226 (RQEP…SVYK), and 334-359 (EAES…TRNN). Over residues 124–133 (KPQESSEKYS) the composition is skewed to basic and acidic residues. Basic residues predominate over residues 134–146 (KKSSTRKKEHFNK). Basic and acidic residues-rich tracts occupy residues 176–187 (RQEPESLKKENN) and 203–219 (GPKD…KIPE).

Its subcellular location is the cytoplasm. The protein resides in the cytoskeleton. Functionally, has a role in sporulation. The sequence is that of Meiotically up-regulated gene 184 protein (mug184) from Schizosaccharomyces pombe (strain 972 / ATCC 24843) (Fission yeast).